The primary structure comprises 446 residues: MSDTNKEVVDLVWGRPSGGGVPASLFRRWSQGFVFSETERSALEQFEGGPCAVIAPVQAFLLKNILFNTEGLNWKDISEEEQRTVLCSTLSEILELACLNKSQAFHLVTWPHAKTTDNSDITDSHPEPESSQPTDTPTALATEELGFERFHSVIQKRTLRTVAELKEAVLSLYDTWKNKFGVLLFLYSVILTKGIENIKNEIEDTTEPLIDPVYGHGSQSLINLLVTGHAVSNVWDGDRECSGMKLHGIYQQASVGFLTLMESLRYCKVGAFLKSPKFPIWILGSETHLSVFFTKEMALVAPESASEQARRVFQTFDPEDNGFIPDTLLEDVMKALDLVSEPDYVNLMKSKLDPEGLGIILLGQFLLEFFPDQDSVIPDSFPVYHYNGLKQSNHNEKVSYVEGTALVMGFEDPMVRTDDTPVKRCLQTKWPYIELLWTTERSPSLN.

Catalysis depends on C51, which acts as the Nucleophile. Over residues 117 to 128 (DNSDITDSHPEP) the composition is skewed to basic and acidic residues. The tract at residues 117 to 137 (DNSDITDSHPEPESSQPTDTP) is disordered. H288 functions as the Proton acceptor in the catalytic mechanism.

Belongs to the MINDY deubiquitinase family. FAM188 subfamily.

The protein localises to the nucleus. The enzyme catalyses Thiol-dependent hydrolysis of ester, thioester, amide, peptide and isopeptide bonds formed by the C-terminal Gly of ubiquitin (a 76-residue protein attached to proteins as an intracellular targeting signal).. Functionally, hydrolase that can remove 'Lys-48'-linked conjugated ubiquitin from proteins. The protein is Ubiquitin carboxyl-terminal hydrolase MINDY-3 (mindy3) of Danio rerio (Zebrafish).